The primary structure comprises 260 residues: Uridylate kinase (260 aa).

Residue 29-32 (KLSG) participates in ATP binding. The tract at residues 37-42 (GDLGYG) is involved in allosteric activation by GTP. Gly71 serves as a coordination point for UMP. Gly72 and Arg76 together coordinate ATP. Residues Asp91 and 152–159 (SGNPFFTT) contribute to the UMP site. ATP is bound by residues Thr179, Tyr185, and Asp188.

The protein belongs to the UMP kinase family. In terms of assembly, homohexamer.

Its subcellular location is the cytoplasm. The enzyme catalyses UMP + ATP = UDP + ADP. It participates in pyrimidine metabolism; CTP biosynthesis via de novo pathway; UDP from UMP (UMPK route): step 1/1. With respect to regulation, allosterically activated by GTP. Inhibited by UTP. In terms of biological role, catalyzes the reversible phosphorylation of UMP to UDP. The protein is Uridylate kinase of Synechocystis sp. (strain ATCC 27184 / PCC 6803 / Kazusa).